The primary structure comprises 153 residues: 6,7-dimethyl-8-ribityllumazine synthase (153 aa).

5-amino-6-(D-ribitylamino)uracil contacts are provided by residues Phe-23, 57–59 (AYE), and 81–83 (AVI). 86-87 (AT) provides a ligand contact to (2S)-2-hydroxy-3-oxobutyl phosphate. His-89 serves as the catalytic Proton donor. A 5-amino-6-(D-ribitylamino)uracil-binding site is contributed by Phe-113. A (2S)-2-hydroxy-3-oxobutyl phosphate-binding site is contributed by Arg-127.

This sequence belongs to the DMRL synthase family.

It carries out the reaction (2S)-2-hydroxy-3-oxobutyl phosphate + 5-amino-6-(D-ribitylamino)uracil = 6,7-dimethyl-8-(1-D-ribityl)lumazine + phosphate + 2 H2O + H(+). The protein operates within cofactor biosynthesis; riboflavin biosynthesis; riboflavin from 2-hydroxy-3-oxobutyl phosphate and 5-amino-6-(D-ribitylamino)uracil: step 1/2. Catalyzes the formation of 6,7-dimethyl-8-ribityllumazine by condensation of 5-amino-6-(D-ribitylamino)uracil with 3,4-dihydroxy-2-butanone 4-phosphate. This is the penultimate step in the biosynthesis of riboflavin. This is 6,7-dimethyl-8-ribityllumazine synthase from Leptospira borgpetersenii serovar Hardjo-bovis (strain JB197).